Consider the following 616-residue polypeptide: Glycoprotein Q1 (616 aa).

An N-terminal signal peptide occupies residues 1-24 (MRPPRRSAPILVCAISMATALSNA). Asparagine 23, asparagine 44, asparagine 282, asparagine 330, and asparagine 351 each carry an N-linked (GlcNAc...) asparagine; by host glycan.

In terms of assembly, interacts with isoform gQ2. The heterodimer gQ1-gQ2 associates with the glycoprotein complex gH-gL to form a tetrameric complex. The gH/gL/gQ1/gQ2 complex binds to host TNFRSF4. Post-translationally, glycosylated by host.

It is found in the virion. It localises to the host endoplasmic reticulum lumen. Functionally, plays a role in virus entry by participating in host receptor binding at the cell surface. This chain is Glycoprotein Q1, found in Homo sapiens (Human).